Consider the following 134-residue polypeptide: DNA-directed RNA polymerase subunit omega (134 aa).

This sequence belongs to the RNA polymerase subunit omega family. The RNAP catalytic core consists of 2 alpha, 1 beta, 1 beta' and 1 omega subunit. When a sigma factor is associated with the core the holoenzyme is formed, which can initiate transcription.

It carries out the reaction RNA(n) + a ribonucleoside 5'-triphosphate = RNA(n+1) + diphosphate. In terms of biological role, promotes RNA polymerase assembly. Latches the N- and C-terminal regions of the beta' subunit thereby facilitating its interaction with the beta and alpha subunits. The sequence is that of DNA-directed RNA polymerase subunit omega from Rhizobium etli (strain CIAT 652).